Consider the following 846-residue polypeptide: DNA mismatch repair protein MutS (846 aa).

594 to 601 serves as a coordination point for ATP; that stretch reads GPNMSGKS.

The protein belongs to the DNA mismatch repair MutS family.

Functionally, this protein is involved in the repair of mismatches in DNA. It is possible that it carries out the mismatch recognition step. This protein has a weak ATPase activity. The protein is DNA mismatch repair protein MutS of Macrococcus caseolyticus (strain JCSC5402) (Macrococcoides caseolyticum).